We begin with the raw amino-acid sequence, 103 residues long: Small ribosomal subunit protein uS10 (103 aa).

Belongs to the universal ribosomal protein uS10 family. Part of the 30S ribosomal subunit.

Its function is as follows. Involved in the binding of tRNA to the ribosomes. This is Small ribosomal subunit protein uS10 from Fusobacterium nucleatum subsp. nucleatum (strain ATCC 25586 / DSM 15643 / BCRC 10681 / CIP 101130 / JCM 8532 / KCTC 2640 / LMG 13131 / VPI 4355).